Here is a 198-residue protein sequence, read N- to C-terminus: Ribonuclease HII (198 aa).

The RNase H type-2 domain occupies 10–198; that stretch reads HLVAGVDEVG…PVKRALGLVS (189 aa). Residues D16, E17, and D108 each coordinate a divalent metal cation.

It belongs to the RNase HII family. Requires Mn(2+) as cofactor. It depends on Mg(2+) as a cofactor.

It localises to the cytoplasm. It catalyses the reaction Endonucleolytic cleavage to 5'-phosphomonoester.. Endonuclease that specifically degrades the RNA of RNA-DNA hybrids. In Salmonella schwarzengrund (strain CVM19633), this protein is Ribonuclease HII.